The sequence spans 574 residues: Arginine--tRNA ligase (574 aa).

The short motif at 121–131 is the 'HIGH' region element; sequence PNIAKEMHIGH.

It belongs to the class-I aminoacyl-tRNA synthetase family. In terms of assembly, monomer.

Its subcellular location is the cytoplasm. It catalyses the reaction tRNA(Arg) + L-arginine + ATP = L-arginyl-tRNA(Arg) + AMP + diphosphate. This chain is Arginine--tRNA ligase, found in Buchnera aphidicola subsp. Acyrthosiphon pisum (strain Tuc7).